The chain runs to 321 residues: Phospho-N-acetylmuramoyl-pentapeptide-transferase (321 aa).

Transmembrane regions (helical) follow at residues 1 to 21, 50 to 70, 76 to 96, 112 to 132, 140 to 160, 173 to 193, 198 to 218, 225 to 245, 250 to 270, and 300 to 320; these read MVYL…PVLI, MGGL…IIFI, IILL…DDYI, FLAQ…FNLT, IPFI…IVFW, GLDG…AIMA, ATSI…FLPF, VFMG…ISIM, LSLL…MIQV, and VVTV…WIGV.

Belongs to the glycosyltransferase 4 family. MraY subfamily. Requires Mg(2+) as cofactor.

The protein localises to the cell membrane. The catalysed reaction is UDP-N-acetyl-alpha-D-muramoyl-L-alanyl-gamma-D-glutamyl-L-lysyl-D-alanyl-D-alanine + di-trans,octa-cis-undecaprenyl phosphate = Mur2Ac(oyl-L-Ala-gamma-D-Glu-L-Lys-D-Ala-D-Ala)-di-trans,octa-cis-undecaprenyl diphosphate + UMP. Its pathway is cell wall biogenesis; peptidoglycan biosynthesis. In terms of biological role, catalyzes the initial step of the lipid cycle reactions in the biosynthesis of the cell wall peptidoglycan: transfers peptidoglycan precursor phospho-MurNAc-pentapeptide from UDP-MurNAc-pentapeptide onto the lipid carrier undecaprenyl phosphate, yielding undecaprenyl-pyrophosphoryl-MurNAc-pentapeptide, known as lipid I. The protein is Phospho-N-acetylmuramoyl-pentapeptide-transferase of Staphylococcus saprophyticus subsp. saprophyticus (strain ATCC 15305 / DSM 20229 / NCIMB 8711 / NCTC 7292 / S-41).